Here is a 172-residue protein sequence, read N- to C-terminus: Transcription factor MafF (172 aa).

The interval 51–76 (RLKQRRRTLKNRGYAASCRVKRVCQK) is basic motif. The bZIP domain maps to 51–114 (RLKQRRRTLK…DALRGKCEAL (64 aa)). Residues 79-93 (LQKQKSELEREVDKL) form a leucine-zipper region. Residues 140–172 (VKSAPSPGPGPAPGPGPASGPGPAPGPAPAACS) are disordered. Residues 145–172 (SPGPGPAPGPGPASGPGPAPGPAPAACS) are compositionally biased toward pro residues.

The protein belongs to the bZIP family. Maf subfamily. Monomer and homo- or heterodimer. Interacts with MIP. Forms high affinity heterodimers with members of the CNC-bZIP family such as NFE2L1/NRF1.

The protein resides in the nucleus. Its function is as follows. Since they lack a putative transactivation domain, the small Mafs behave as transcriptional repressors when they dimerize among themselves. However, they seem to serve as transcriptional activators by dimerizing with other (usually larger) basic-zipper proteins, such as NFE2L1/NRF1, and recruiting them to specific DNA-binding sites. Interacts with the upstream promoter region of the oxytocin receptor gene. May be a transcriptional enhancer in the up-regulation of the oxytocin receptor gene at parturition. The chain is Transcription factor MafF (MAFF) from Bos taurus (Bovine).